A 135-amino-acid chain; its full sequence is Ribonuclease VapC35 (135 aa).

One can recognise a PINc domain in the interval 2 to 123 (IYLETSALVK…DNRLKEAAEA (122 aa)). Mg(2+)-binding residues include Glu5 and Asp91.

This sequence belongs to the PINc/VapC protein family. Mg(2+) serves as cofactor.

Functionally, toxic component of a type II toxin-antitoxin (TA) system. An RNase. Its toxic effect is neutralized by coexpression with cognate antitoxin VapB35. In Mycobacterium tuberculosis (strain CDC 1551 / Oshkosh), this protein is Ribonuclease VapC35.